The chain runs to 337 residues: Tryptophan--tRNA ligase (337 aa).

Residues Arg-9–Thr-11 and Gly-17–His-18 contribute to the ATP site. The 'HIGH' region signature appears at Pro-10 to His-18. Asp-137 provides a ligand contact to L-tryptophan. Residues Gly-149–Asp-151, Leu-187, and Lys-195–Ser-199 each bind ATP. Positions Lys-195 to Ser-199 match the 'KMSKS' region motif.

This sequence belongs to the class-I aminoacyl-tRNA synthetase family. In terms of assembly, homodimer.

It is found in the cytoplasm. It carries out the reaction tRNA(Trp) + L-tryptophan + ATP = L-tryptophyl-tRNA(Trp) + AMP + diphosphate + H(+). In terms of biological role, catalyzes the attachment of tryptophan to tRNA(Trp). The protein is Tryptophan--tRNA ligase of Treponema pallidum (strain Nichols).